A 394-amino-acid polypeptide reads, in one-letter code: Obg-like ATPase 1 (394 aa).

Residues 25-282 (LKIGIVGLPN…MAPDEAAKYC (258 aa)) enclose the OBG-type G domain. ATP-binding positions include 34–39 (NVGKST), 56–60 (FCTIE), and 94–97 (DIAG). Ser-38 and Thr-58 together coordinate Mg(2+). GTP is bound at residue Phe-129. Residues 230-231 (NL), Leu-231, and 263-265 (SGV) contribute to the ATP site. 263-265 (SGV) is a binding site for GTP. The TGS domain maps to 303 to 386 (NLIYFFTAGP…QDGDIIFFKF (84 aa)).

It belongs to the TRAFAC class OBG-HflX-like GTPase superfamily. OBG GTPase family. YchF/OLA1 subfamily. In terms of assembly, monomer (Potential). Interacts with CAR4/GAP1. It depends on Mg(2+) as a cofactor.

It is found in the cytoplasm. The protein localises to the cytosol. Its activity is regulated as follows. Activated by GAP1. Functionally, hydrolyzes ATP, and can also hydrolyze GTP with lower efficiency. Has lower affinity for GTP (Potential). Exhibits GTPase activity. Confers sensitivity to salinity stress by suppressing the anti-oxidation enzymatic activities and increasing lipid peroxidation thus leading to the accumulation of reactive oxygen species (ROS). Acts as a negative regulator of disease resistance against bacterial pathogen. The polypeptide is Obg-like ATPase 1 (Arabidopsis thaliana (Mouse-ear cress)).